Reading from the N-terminus, the 1708-residue chain is 187-kDa microtubule-associated protein AIR9 (1708 aa).

A compositionally biased stretch (polar residues) spans Ser67–Gly93. The disordered stretch occupies residues Ser67 to Ser255. Residues Asp110–Lys121 show a composition bias toward basic and acidic residues. Residues Ser122–Lys134 show a composition bias toward low complexity. The span at Gly149–Glu165 shows a compositional bias: polar residues. Residues Ser173–Pro234 are compositionally biased toward low complexity. LRR repeat units follow at residues Ala267–Leu290, Ser291–Arg315, Val316–Glu335, Cys337–Leu359, Pro360–Arg382, Gln384–Leu402, and Pro403–Ser425. A9 repeat units follow at residues Pro489 to Ser584, Leu601 to Tyr682, Ile698 to Ser777, Ile793 to Leu878, Ile895 to Met977, Val994 to Glu1073, Phe1090 to Arg1167, Ile1183 to Ile1272, Val1287 to Glu1365, Phe1382 to Glu1473, and Ile1489 to Ser1569.

As to quaternary structure, interacts with KCBP. Strongly expressed in dividing cells, like the meristemic region of the root tip.

Its subcellular location is the cytoplasm. The protein resides in the cell cortex. It is found in the cytoskeleton. It localises to the phragmoplast. Functionally, microtubule-associated protein that may be involved in the maturation of cell plates and proper insertion of cross-walls after cytokinesis. In Arabidopsis thaliana (Mouse-ear cress), this protein is 187-kDa microtubule-associated protein AIR9.